The chain runs to 200 residues: Peptidyl-tRNA hydrolase (200 aa).

Tyr15 contributes to the tRNA binding site. His20 functions as the Proton acceptor in the catalytic mechanism. 3 residues coordinate tRNA: Tyr66, Asn68, and Asn114.

It belongs to the PTH family. In terms of assembly, monomer.

It localises to the cytoplasm. The enzyme catalyses an N-acyl-L-alpha-aminoacyl-tRNA + H2O = an N-acyl-L-amino acid + a tRNA + H(+). Hydrolyzes ribosome-free peptidyl-tRNAs (with 1 or more amino acids incorporated), which drop off the ribosome during protein synthesis, or as a result of ribosome stalling. Functionally, catalyzes the release of premature peptidyl moieties from peptidyl-tRNA molecules trapped in stalled 50S ribosomal subunits, and thus maintains levels of free tRNAs and 50S ribosomes. The sequence is that of Peptidyl-tRNA hydrolase from Paraburkholderia phymatum (strain DSM 17167 / CIP 108236 / LMG 21445 / STM815) (Burkholderia phymatum).